Reading from the N-terminus, the 604-residue chain is Glutamine--fructose-6-phosphate aminotransferase [isomerizing] (604 aa).

Cys2 serves as the catalytic Nucleophile; for GATase activity. The Glutamine amidotransferase type-2 domain maps to 2 to 219; it reads CGIMGAVSER…EGDSACVTTQ (218 aa). 2 SIS domains span residues 279–427 and 454–594; these read LRAS…DNRA and LASL…VDQP. Residue Lys599 is the For Fru-6P isomerization activity of the active site.

Homodimer.

The protein resides in the cytoplasm. It catalyses the reaction D-fructose 6-phosphate + L-glutamine = D-glucosamine 6-phosphate + L-glutamate. In terms of biological role, catalyzes the first step in hexosamine metabolism, converting fructose-6P into glucosamine-6P using glutamine as a nitrogen source. This chain is Glutamine--fructose-6-phosphate aminotransferase [isomerizing], found in Legionella pneumophila (strain Paris).